The primary structure comprises 220 residues: Uracil-DNA glycosylase (220 aa).

D61 functions as the Proton acceptor in the catalytic mechanism.

This sequence belongs to the uracil-DNA glycosylase (UDG) superfamily. UNG family.

It is found in the cytoplasm. It carries out the reaction Hydrolyzes single-stranded DNA or mismatched double-stranded DNA and polynucleotides, releasing free uracil.. Its function is as follows. Excises uracil residues from the DNA which can arise as a result of misincorporation of dUMP residues by DNA polymerase or due to deamination of cytosine. The protein is Uracil-DNA glycosylase of Pseudoalteromonas translucida (strain TAC 125).